A 596-amino-acid polypeptide reads, in one-letter code: Meiosis-specific protein ASY1 (596 aa).

One can recognise an HORMA domain in the interval 15–228; that stretch reads QDSLLLTRNL…SKHLVLTLKV (214 aa). A disordered region spans residues 235-303; that stretch reads CEDENDDMQD…NTQDPAENEQ (69 aa). Residues 282-295 show a composition bias toward acidic residues; the sequence is QDDDDGEVDEDDNT. An SWIRM domain is found at 351-449; that stretch reads SKTGKDMYIK…ASSNRRLGKR (99 aa). A disordered region spans residues 562 to 596; sequence TVNCSQASQDRRGRKTSMVREPILQYSKRQKSQAN.

In terms of assembly, interacts with ASY3.

It localises to the chromosome. It is found in the nucleus. Its function is as follows. Required for normal meiosis in male and female gametophytes. Plays a crucial role in coordinating the activity of DMC1, a key member of the homologous recombination machinery. Acts at the interface between the developing chromosome axes and the recombination machinery to ensure DMC1-mediated interhomolog recombination. The sequence is that of Meiosis-specific protein ASY1 from Arabidopsis thaliana (Mouse-ear cress).